A 175-amino-acid polypeptide reads, in one-letter code: Epididymal-specific lipocalin-8 (175 aa).

Residues 1-25 (MPGAAEALPTVTVTLVAGAVPPASG) form the signal peptide. 2 N-linked (GlcNAc...) asparagine glycosylation sites follow: Asn66 and Asn74. A disulfide bridge links Cys79 with Cys166.

This sequence belongs to the calycin superfamily. Lipocalin family.

It is found in the secreted. May play a role in male fertility. May act as a retinoid carrier protein within the epididymis. In Homo sapiens (Human), this protein is Epididymal-specific lipocalin-8 (LCN8).